Here is a 43-residue protein sequence, read N- to C-terminus: Jararafibrase-3 (43 aa).

In terms of domain architecture, C-type lectin spans Met-10–Phe-43.

The protein belongs to the true venom lectin family. In terms of assembly, monomer. Expressed by the venom gland.

It is found in the secreted. With respect to regulation, inhibited by 1,10-phenanthroline and EDTA. May have both metalloproteinase and lectin activities. Induces local hemorrhage in the skin of rats. Degrades type-IV collagen, gelatin, laminin and fibronectin. Has hemagglutinating activity on red blood cells. The protein is Jararafibrase-3 of Bothrops jararaca (Jararaca).